Reading from the N-terminus, the 412-residue chain is Tryptophan synthase beta chain 1 (412 aa).

The residue at position 103 (Lys-103) is an N6-(pyridoxal phosphate)lysine.

It belongs to the TrpB family. In terms of assembly, tetramer of two alpha and two beta chains. It depends on pyridoxal 5'-phosphate as a cofactor.

The enzyme catalyses (1S,2R)-1-C-(indol-3-yl)glycerol 3-phosphate + L-serine = D-glyceraldehyde 3-phosphate + L-tryptophan + H2O. It participates in amino-acid biosynthesis; L-tryptophan biosynthesis; L-tryptophan from chorismate: step 5/5. In terms of biological role, the beta subunit is responsible for the synthesis of L-tryptophan from indole and L-serine. The chain is Tryptophan synthase beta chain 1 (trpB1) from Chlamydia caviae (strain ATCC VR-813 / DSM 19441 / 03DC25 / GPIC) (Chlamydophila caviae).